Consider the following 406-residue polypeptide: Peptide antibiotic transporter SbmA (406 aa).

Residues 1–11 are Periplasmic-facing; it reads MFKSFFPKPGT. A helical transmembrane segment spans residues 12–32; the sequence is FFLSAFVWALIAVIFWQAGGG. Residues 33–56 are Cytoplasmic-facing; sequence DWVARITGASGQIPISAARFWSLD. The chain crosses the membrane as a helical span at residues 57 to 77; that stretch reads FLIFYAYYIVCVGLFALFWFI. At 78-87 the chain is on the periplasmic side; sequence YSPHRWQYWS. Residues 88-108 traverse the membrane as a helical segment; it reads ILGTALIIFVTWFLVEVGVAV. Topologically, residues 109–137 are cytoplasmic; that stretch reads NAWYAPFYDLIQTALSSPHKVTIEQFYRE. The helical transmembrane segment at 138–158 threads the bilayer; the sequence is VGVFLGIALIAVVISVLNNFF. The Periplasmic segment spans residues 159-205; sequence VSHYVFRWRTAMNEYYMANWQQLRHIEGAAQRVQEDTMRFASTLENM. A helical transmembrane segment spans residues 206–226; sequence GVSFINAIMTLIAFLPVLVTL. The Cytoplasmic segment spans residues 227 to 242; the sequence is SAHVPELPIIGHIPYG. The chain crosses the membrane as a helical span at residues 243-263; the sequence is LVIAAIVWSLMGTGLLAVVGI. Residues 264–331 are Periplasmic-facing; that stretch reads KLPGLEFKNQ…ARILYLQVDN (68 aa). The helical transmembrane segment at 332–352 threads the bilayer; it reads VFGLFLLFPSIVAGTITLGLM. Residues 353 to 406 are Cytoplasmic-facing; it reads TQITNVFGQVRGAFQYLINSWTTLVELMSIYKRLRSFEHELDGDKIQEVTHTLS.

The protein belongs to the peptide uptake permease (PUP) (TC 9.A.18) family.

The protein localises to the cell inner membrane. Functionally, uptake of antimicrobial peptides. This chain is Peptide antibiotic transporter SbmA (sbmA), found in Escherichia coli O157:H7.